The chain runs to 265 residues: Type III pantothenate kinase (265 aa).

Residue 6-13 (DVGNTNIV) participates in ATP binding. Residue 112 to 115 (GADR) coordinates substrate. The Proton acceptor role is filled by Asp114. A K(+)-binding site is contributed by Asp134. Thr137 contacts ATP. Substrate is bound at residue Thr189.

The protein belongs to the type III pantothenate kinase family. In terms of assembly, homodimer. Requires NH4(+) as cofactor. It depends on K(+) as a cofactor.

The protein localises to the cytoplasm. The enzyme catalyses (R)-pantothenate + ATP = (R)-4'-phosphopantothenate + ADP + H(+). The protein operates within cofactor biosynthesis; coenzyme A biosynthesis; CoA from (R)-pantothenate: step 1/5. In terms of biological role, catalyzes the phosphorylation of pantothenate (Pan), the first step in CoA biosynthesis. The sequence is that of Type III pantothenate kinase from Saccharopolyspora erythraea (strain ATCC 11635 / DSM 40517 / JCM 4748 / NBRC 13426 / NCIMB 8594 / NRRL 2338).